Here is a 242-residue protein sequence, read N- to C-terminus: Phosphatidylcholine synthase (242 aa).

The Cytoplasmic segment spans residues Met1–Arg15. A helical membrane pass occupies residues Ala16–Ala36. Residues Ala37–Arg41 lie on the Periplasmic side of the membrane. Residues Phe42 to Ile62 traverse the membrane as a helical segment. The Cytoplasmic portion of the chain corresponds to Ala63 to Ser76. Residues Gly77 to Leu97 form a helical membrane-spanning segment. Topologically, residues Tyr98–Ser100 are periplasmic. Residues Gly101–Ile121 form a helical membrane-spanning segment. The Cytoplasmic segment spans residues Tyr122–Tyr133. Residues Phe134 to Ala154 form a helical membrane-spanning segment. The Periplasmic portion of the chain corresponds to Ser155–Ala159. The helical transmembrane segment at Leu160–Val180 threads the bilayer. The Cytoplasmic segment spans residues Arg181–Pro187. Residues Leu188 to Phe208 traverse the membrane as a helical segment. The Periplasmic segment spans residues Asp209 to Ala214. The helical transmembrane segment at Leu215–Phe235 threads the bilayer. The Cytoplasmic segment spans residues Pro236–Thr242.

The protein belongs to the CDP-alcohol phosphatidyltransferase class-I family. The cofactor is Mn(2+).

Its subcellular location is the cell inner membrane. It carries out the reaction a CDP-1,2-diacyl-sn-glycerol + choline = a 1,2-diacyl-sn-glycero-3-phosphocholine + CMP + H(+). Functionally, condenses choline with CDP-diglyceride to produce phosphatidylcholine and CMP. The protein is Phosphatidylcholine synthase of Rhizobium johnstonii (strain DSM 114642 / LMG 32736 / 3841) (Rhizobium leguminosarum bv. viciae).